The sequence spans 515 residues: 2-isopropylmalate synthase (515 aa).

Positions Val5–His267 constitute a Pyruvate carboxyltransferase domain. Residues Asp14, His202, His204, and Asn238 each contribute to the Mn(2+) site. A regulatory domain region spans residues Val392–His515.

Belongs to the alpha-IPM synthase/homocitrate synthase family. LeuA type 1 subfamily. As to quaternary structure, homodimer. It depends on Mn(2+) as a cofactor.

Its subcellular location is the cytoplasm. It catalyses the reaction 3-methyl-2-oxobutanoate + acetyl-CoA + H2O = (2S)-2-isopropylmalate + CoA + H(+). It functions in the pathway amino-acid biosynthesis; L-leucine biosynthesis; L-leucine from 3-methyl-2-oxobutanoate: step 1/4. Its function is as follows. Catalyzes the condensation of the acetyl group of acetyl-CoA with 3-methyl-2-oxobutanoate (2-ketoisovalerate) to form 3-carboxy-3-hydroxy-4-methylpentanoate (2-isopropylmalate). This chain is 2-isopropylmalate synthase, found in Haemophilus influenzae (strain PittEE).